Reading from the N-terminus, the 601-residue chain is Potassium-transporting ATPase potassium-binding subunit (601 aa).

A run of 12 helical transmembrane segments spans residues 3–23, 62–82, 132–152, 179–199, 283–303, 314–334, 367–387, 397–417, 419–439, 459–479, 523–543, and 564–584; these read ASAW…AWPL, HYAL…YALQ, LGLS…AFAL, AWVL…QGVI, LTNL…CFAF, VAIL…VTAA, FGIS…CGAV, LGGM…GGAG, GLYG…LMIG, VAIL…VLAP, VLLA…VLAI, and GPLF…LNYV.

This sequence belongs to the KdpA family. As to quaternary structure, the system is composed of three essential subunits: KdpA, KdpB and KdpC.

The protein localises to the cell inner membrane. In terms of biological role, part of the high-affinity ATP-driven potassium transport (or Kdp) system, which catalyzes the hydrolysis of ATP coupled with the electrogenic transport of potassium into the cytoplasm. This subunit binds the periplasmic potassium ions and delivers the ions to the membrane domain of KdpB through an intramembrane tunnel. The chain is Potassium-transporting ATPase potassium-binding subunit from Paracidovorax citrulli (strain AAC00-1) (Acidovorax citrulli).